The chain runs to 520 residues: 2-isopropylmalate synthase (520 aa).

The Pyruvate carboxyltransferase domain maps to 5–267; the sequence is VIIFDTTLRD…HTNINHQEIY (263 aa). Aspartate 14, histidine 202, histidine 204, and asparagine 238 together coordinate Mn(2+). The tract at residues 392–520 is regulatory domain; that stretch reads RLDYFSVQSG…RLQQNNQEMV (129 aa).

This sequence belongs to the alpha-IPM synthase/homocitrate synthase family. LeuA type 1 subfamily. As to quaternary structure, homodimer. The cofactor is Mn(2+).

Its subcellular location is the cytoplasm. The catalysed reaction is 3-methyl-2-oxobutanoate + acetyl-CoA + H2O = (2S)-2-isopropylmalate + CoA + H(+). It participates in amino-acid biosynthesis; L-leucine biosynthesis; L-leucine from 3-methyl-2-oxobutanoate: step 1/4. Its function is as follows. Catalyzes the condensation of the acetyl group of acetyl-CoA with 3-methyl-2-oxobutanoate (2-ketoisovalerate) to form 3-carboxy-3-hydroxy-4-methylpentanoate (2-isopropylmalate). This is 2-isopropylmalate synthase from Yersinia pseudotuberculosis serotype O:1b (strain IP 31758).